We begin with the raw amino-acid sequence, 285 residues long: Phosphatidylserine decarboxylase proenzyme (285 aa).

Catalysis depends on charge relay system; for autoendoproteolytic cleavage activity residues aspartate 89, histidine 146, and serine 252. Serine 252 (schiff-base intermediate with substrate; via pyruvic acid; for decarboxylase activity) is an active-site residue. Pyruvic acid (Ser); by autocatalysis is present on serine 252.

It belongs to the phosphatidylserine decarboxylase family. PSD-B subfamily. Prokaryotic type I sub-subfamily. As to quaternary structure, heterodimer of a large membrane-associated beta subunit and a small pyruvoyl-containing alpha subunit. It depends on pyruvate as a cofactor. In terms of processing, is synthesized initially as an inactive proenzyme. Formation of the active enzyme involves a self-maturation process in which the active site pyruvoyl group is generated from an internal serine residue via an autocatalytic post-translational modification. Two non-identical subunits are generated from the proenzyme in this reaction, and the pyruvate is formed at the N-terminus of the alpha chain, which is derived from the carboxyl end of the proenzyme. The autoendoproteolytic cleavage occurs by a canonical serine protease mechanism, in which the side chain hydroxyl group of the serine supplies its oxygen atom to form the C-terminus of the beta chain, while the remainder of the serine residue undergoes an oxidative deamination to produce ammonia and the pyruvoyl prosthetic group on the alpha chain. During this reaction, the Ser that is part of the protease active site of the proenzyme becomes the pyruvoyl prosthetic group, which constitutes an essential element of the active site of the mature decarboxylase.

Its subcellular location is the cell membrane. The catalysed reaction is a 1,2-diacyl-sn-glycero-3-phospho-L-serine + H(+) = a 1,2-diacyl-sn-glycero-3-phosphoethanolamine + CO2. It participates in phospholipid metabolism; phosphatidylethanolamine biosynthesis; phosphatidylethanolamine from CDP-diacylglycerol: step 2/2. In terms of biological role, catalyzes the formation of phosphatidylethanolamine (PtdEtn) from phosphatidylserine (PtdSer). The polypeptide is Phosphatidylserine decarboxylase proenzyme (Vibrio campbellii (strain ATCC BAA-1116)).